The primary structure comprises 144 residues: Granulocyte-macrophage colony-stimulating factor (144 aa).

Positions 1 to 17 (MWLQGLLLLGTVACSIS) are cleaved as a signal peptide. The O-linked (GalNAc...) serine glycan is linked to Ser-24. Thr-27 carries O-linked (GalNAc...) threonine glycosylation. Asn-44 and Asn-54 each carry an N-linked (GlcNAc...) asparagine glycan. 2 disulfides stabilise this stretch: Cys-71–Cys-113 and Cys-105–Cys-138.

This sequence belongs to the GM-CSF family. As to quaternary structure, monomer. The signaling GM-CSF receptor complex is a dodecamer of two head-to-head hexamers of two alpha, two beta, and two ligand subunits.

The protein localises to the secreted. Functionally, cytokine that stimulates the growth and differentiation of hematopoietic precursor cells from various lineages, including granulocytes, macrophages, eosinophils and erythrocytes. The protein is Granulocyte-macrophage colony-stimulating factor (CSF2) of Chlorocebus aethiops (Green monkey).